An 884-amino-acid chain; its full sequence is Alanine--tRNA ligase (884 aa).

Zn(2+) contacts are provided by His565, His569, Cys674, and His678.

Belongs to the class-II aminoacyl-tRNA synthetase family. The cofactor is Zn(2+).

It is found in the cytoplasm. It carries out the reaction tRNA(Ala) + L-alanine + ATP = L-alanyl-tRNA(Ala) + AMP + diphosphate. Functionally, catalyzes the attachment of alanine to tRNA(Ala) in a two-step reaction: alanine is first activated by ATP to form Ala-AMP and then transferred to the acceptor end of tRNA(Ala). Also edits incorrectly charged Ser-tRNA(Ala) and Gly-tRNA(Ala) via its editing domain. This chain is Alanine--tRNA ligase, found in Xanthobacter autotrophicus (strain ATCC BAA-1158 / Py2).